The chain runs to 399 residues: Phosphoglycerate kinase (399 aa).

Substrate-binding positions include 24-26 (DLN), arginine 41, 64-67 (HLGR), arginine 123, and arginine 160. Residues lysine 210, glycine 298, glutamate 329, and 355–358 (GGDS) each bind ATP.

The protein belongs to the phosphoglycerate kinase family. Monomer.

The protein localises to the cytoplasm. It carries out the reaction (2R)-3-phosphoglycerate + ATP = (2R)-3-phospho-glyceroyl phosphate + ADP. It functions in the pathway carbohydrate degradation; glycolysis; pyruvate from D-glyceraldehyde 3-phosphate: step 2/5. This is Phosphoglycerate kinase from Salinispora arenicola (strain CNS-205).